The following is a 272-amino-acid chain: Probable feruloyl esterase C (272 aa).

The signal sequence occupies residues 1 to 22 (MVPTIIYSAILALSAFTPSVFA).

It belongs to the faeC family.

It is found in the secreted. It catalyses the reaction feruloyl-polysaccharide + H2O = ferulate + polysaccharide.. Involved in degradation of plant cell walls. Hydrolyzes the feruloyl-arabinose ester bond in arabinoxylans, and the feruloyl-galactose ester bond in pectin. Active against paranitrophenyl-acetate, methyl ferulate and wheat arabinoxylan. This chain is Probable feruloyl esterase C (faeC), found in Aspergillus fumigatus (strain ATCC MYA-4609 / CBS 101355 / FGSC A1100 / Af293) (Neosartorya fumigata).